The primary structure comprises 406 residues: Multifunctional CCA protein (406 aa).

2 residues coordinate ATP: Gly8 and Arg11. CTP is bound by residues Gly8 and Arg11. Asp21 and Asp23 together coordinate Mg(2+). The ATP site is built by Arg91, Arg137, and Arg140. 3 residues coordinate CTP: Arg91, Arg137, and Arg140. Residues 228-329 form the HD domain; the sequence is TGIHTLMVAQ…IKILNKFDVW (102 aa).

The protein belongs to the tRNA nucleotidyltransferase/poly(A) polymerase family. Bacterial CCA-adding enzyme type 1 subfamily. Monomer. Can also form homodimers and oligomers. Requires Mg(2+) as cofactor. Ni(2+) is required as a cofactor.

It carries out the reaction a tRNA precursor + 2 CTP + ATP = a tRNA with a 3' CCA end + 3 diphosphate. The catalysed reaction is a tRNA with a 3' CCA end + 2 CTP + ATP = a tRNA with a 3' CCACCA end + 3 diphosphate. Its function is as follows. Catalyzes the addition and repair of the essential 3'-terminal CCA sequence in tRNAs without using a nucleic acid template. Adds these three nucleotides in the order of C, C, and A to the tRNA nucleotide-73, using CTP and ATP as substrates and producing inorganic pyrophosphate. tRNA 3'-terminal CCA addition is required both for tRNA processing and repair. Also involved in tRNA surveillance by mediating tandem CCA addition to generate a CCACCA at the 3' terminus of unstable tRNAs. While stable tRNAs receive only 3'-terminal CCA, unstable tRNAs are marked with CCACCA and rapidly degraded. In Vibrio campbellii (strain ATCC BAA-1116), this protein is Multifunctional CCA protein.